The following is a 505-amino-acid chain: MGKFTSFLKRAGNATKRALTSDSAKKMYKLAGKTLQRVVESEVGSAAIDGVMQGAIQSIIQGENLGDSIKQAVILNVAGTLESAPDPLSPGEQLLYNKVSEIEKMEKEDRVIETHNAKIEEKFGKDLLAIRKIVKGEVDAEKLEGNEIKYVEKALSGLLEIGKDQSERITKLYRALQTEEDLRTRDETRMINEYREKFDALKEAIEIEQQATHDEAIQEMLDLSAEVIETASEEVPIFGAGAANVIATTRAIQGGLKLKEIVDKLTGIDLSHLKVADIHPHIIEKAMLRDTVTDKDLAMAIKSKVDVIDEMNVETQHVIDAVLPIVKQEYEKHDNKYHVRIPGALKIHSEHTPKIHIYTTPWDSDSVFMCRAIAPHHQQRSFFIGFDLEIEYVHFEDTSVEGHILHGGAITVEGRGFRQAYTEFMNAAWGMPTTPELHKRKLQRSMGTHPIYMGSMDYAISYEQLVSNAMRLVYDSELQMHCLRGPLKFQRRTLMNALLYGVKIA.

Residues 1–42 (MGKFTSFLKRAGNATKRALTSDSAKKMYKLAGKTLQRVVESE) are involved in membrane permeabilization.

The protein belongs to the orbivirus VP5 family.

It is found in the virion. Functionally, VP5 protein is one of the two proteins (with VP2) which constitute the virus particle outer capsid. Acts as a membrane permeabilization protein that mediates release of viral particles from endosomal compartments into the cytoplasm. Permeabilization activity is probably negatively regulated by VP2 and is triggered by endosomal degradation of VP2 and exposure to low pH. The polypeptide is Outer capsid protein VP5 (Segment-6) (African horse sickness virus (AHSV)).